The chain runs to 190 residues: Subtilisin inhibitor CLSI-II (190 aa).

Intrachain disulfides connect Cys44–Cys88 and Cys142–Cys149.

It belongs to the protease inhibitor I3 (leguminous Kunitz-type inhibitor) family. Forms active dimers on storage in aqueous solution, possibly through formation of an intermolecular disulfide bond. The N-terminal Asn is removed in about 50% of both the CLSI-II and CLSI-III chains.

Its subcellular location is the secreted. Its function is as follows. Inhibits subtilisin-type microbial serine proteases incuding proteinase K, subtilisin BPN', subtilisin Carlsberg and subtilisin E in a non-stoichiometric manner. Weakly inhibits A.oryzae protease and some metalloproteases including pronase E. Does not inhibit trypsin, chymotrypsin, S.griseus alkaline protease or A.lyticus lysyl endopeptidase. CLSI-II has a wider inhibitory specificity than CLSI-III. The chain is Subtilisin inhibitor CLSI-II from Canavalia lineata (Beach bean).